A 459-amino-acid polypeptide reads, in one-letter code: Methylenetetrahydrofolate--tRNA-(uracil-5-)-methyltransferase TrmFO (459 aa).

26 to 31 (GGGLAG) lines the FAD pocket.

Belongs to the MnmG family. TrmFO subfamily. FAD is required as a cofactor.

Its subcellular location is the cytoplasm. The catalysed reaction is uridine(54) in tRNA + (6R)-5,10-methylene-5,6,7,8-tetrahydrofolate + NADH + H(+) = 5-methyluridine(54) in tRNA + (6S)-5,6,7,8-tetrahydrofolate + NAD(+). The enzyme catalyses uridine(54) in tRNA + (6R)-5,10-methylene-5,6,7,8-tetrahydrofolate + NADPH + H(+) = 5-methyluridine(54) in tRNA + (6S)-5,6,7,8-tetrahydrofolate + NADP(+). Its function is as follows. Catalyzes the folate-dependent formation of 5-methyl-uridine at position 54 (M-5-U54) in all tRNAs. In Synechococcus sp. (strain JA-2-3B'a(2-13)) (Cyanobacteria bacterium Yellowstone B-Prime), this protein is Methylenetetrahydrofolate--tRNA-(uracil-5-)-methyltransferase TrmFO.